We begin with the raw amino-acid sequence, 699 residues long: UV radiation resistance-associated gene protein (699 aa).

Residues 1-10 (MSASASVGGP) show a composition bias toward low complexity. Residues 1–24 (MSASASVGGPVPQPPPGPAAALPP) form a disordered region. One can recognise a C2 domain in the interval 23–149 (PPGSAARALH…YLGQQIHARN (127 aa)). Residues 200-269 (HRAQCAIKQT…REVALLHKQQ (70 aa)) form a sufficient for interaction with STX7; VTI1B AND STX8 region. The stretch at 224-305 (LRLTSTSNEL…LRKECTAKRE (82 aa)) forms a coiled coil. Residues 270–442 (IALQDKGSAF…IAQLRYQHGL (173 aa)) form a sufficient for interaction with VPS16, required for interaction with CEP63 region. The required for interaction with PRKDC, XRCC6 and XRCC5 stretch occupies residues 443–699 (GTPDLRQTLP…FRRPRRSSDK (257 aa)). The tract at residues 486–591 (GGADVGFSGG…SQEQGEALSG (106 aa)) is disordered. A Phosphoserine modification is found at Ser-493. Residue Ser-498 is modified to Phosphoserine; by MTOR. Ser-508 is subject to Phosphoserine. Thr-518 carries the post-translational modification Phosphothreonine. Ser-522 is subject to Phosphoserine. The span at 523–535 (YNSALAQPVTTVP) shows a compositional bias: polar residues. Low complexity predominate over residues 545 to 556 (TSLSSSLDTSLD). 2 positions are modified to phosphoserine: Ser-549 and Ser-550. A compositionally biased stretch (basic and acidic residues) spans 557–567 (FSKENKKKGED). Residues Ser-571, Ser-582, and Ser-689 each carry the phosphoserine modification.

Component of the PI3K (PI3KC3/PI3K-III/class III phosphatidylinositol 3-kinase) complex II (PI3KC3-C2) in which the core composed of the catalytic subunit PIK3C3, the regulatory subunit PIK3R4 and BECN1 is associated with UVRAG; in the complex interacts directly with BECN1. PI3KC3-C2 can associate with further regulatory subunits such as RUBCN and probably SH3GLB1/Bif-1. Interacts with SH3GLB1; UVRAG bridges the interaction to BECN1 indicative for an association with the PI3K complex PI3KC3-C2. Interacts with RINT1. Associates with the NRZ complex under basal conditions and dissociates from it under autophagy conditions to associate with the PI3K complex; these complex associations seem to be mutually exclusive. Interacts with VPS16; VPS11; VPS18; VPS33 (VPS33A or VPS33B) and VPS39; indicative for an association with a class C Vps tethering complex (possibly the HOPS complex). Interacts with RAB7A; RAB7A competes with UVRAG for RUBCN binding. Interacts with STX7, VTI1B, STX8. Interacts with PRKDC, XRCC6 and XRCC5; indicative for an association with the DNA-dependent protein kinase complex DNA-PK. Interacts with CEP63. Directly interacts with FEZ1 and SCOC; the interaction with SCOC is reduced by amino acid starvation, but the complex is stabilized in the presence of FEZ1. Interacts with BECN1P1/BECN2. Interacts with SLAMF1. Interacts with RUBCNL/PACER; promoting targeting of UVRAG to autophagosome. Interacts with WNK1. Post-translationally, phosphorylated at Ser-498 by MTOR under basal conditions; increases the interaction with RUBCN implicated in inhibitory effect of RUBCN on PI3KC3 and decreases interaction with RAB7,A and VPS16 and VPS39 (indicative for a class C Vps complex, possibly the HOPS complex). Highly expressed in brain, lung, kidney and liver.

Its subcellular location is the late endosome. It localises to the lysosome. It is found in the cytoplasmic vesicle. The protein resides in the autophagosome. The protein localises to the early endosome. Its subcellular location is the endoplasmic reticulum. It localises to the midbody. It is found in the chromosome. The protein resides in the centromere. Versatile protein that is involved in regulation of different cellular pathways implicated in membrane trafficking. Involved in regulation of the COPI-dependent retrograde transport from Golgi and the endoplasmic reticulum by associating with the NRZ complex; the function is dependent on its binding to phosphatidylinositol 3-phosphate (PtdIns(3)P). During autophagy acts as a regulatory subunit of the alternative PI3K complex II (PI3KC3-C2) that mediates formation of phosphatidylinositol 3-phosphate and is believed to be involved in maturation of autophagosomes and endocytosis. Activates lipid kinase activity of PIK3C3. Involved in the regulation of degradative endocytic trafficking and cytokinesis, and in regulation of ATG9A transport from the Golgi to the autophagosome; the functions seems to implicate its association with PI3KC3-C2. Involved in maturation of autophagosomes and degradative endocytic trafficking independently of BECN1 but depending on its association with a class C Vps complex (possibly the HOPS complex); the association is also proposed to promote autophagosome recruitment and activation of Rab7 and endosome-endosome fusion events. Enhances class C Vps complex (possibly HOPS complex) association with a SNARE complex and promotes fusogenic SNARE complex formation during late endocytic membrane fusion. In case of negative-strand RNA virus infection is required for efficient virus entry, promotes endocytic transport of virions and is implicated in a VAMP8-specific fusogenic SNARE complex assembly. Its function is as follows. Involved in maintaining chromosomal stability. Promotes DNA double-strand break (DSB) repair by association with DNA-dependent protein kinase complex DNA-PK and activating it in non-homologous end joining (NHEJ). Required for centrosome stability and proper chromosome segregation. The polypeptide is UV radiation resistance-associated gene protein (UVRAG) (Homo sapiens (Human)).